Consider the following 932-residue polypeptide: PMS1 protein homolog 1 (932 aa).

Residues 465–493 (TQSENGNKDHIDESGENEEEAGLENSSEI) are disordered. The HMG box DNA-binding region spans 571-639 (IKKPMSASAL…RYNSQMKRAI (69 aa)).

It belongs to the DNA mismatch repair MutL/HexB family. In terms of assembly, component of the DNA mismatch repair (MMR) complex composed at least of MSH2, MSH3, MSH6, PMS1 and MLH1. The MutL-beta complex is a heterodimer of PMS1 and MLH1. Interacts with MCM9.

It is found in the nucleus. Probably involved in the repair of mismatches in DNA. This Homo sapiens (Human) protein is PMS1 protein homolog 1 (PMS1).